The sequence spans 409 residues: 2,3-bisphosphoglycerate-independent phosphoglycerate mutase 1 (409 aa).

A compositionally biased stretch (basic and acidic residues) spans 163–173 (SDADPKVEGKP). A disordered region spans residues 163 to 184 (SDADPKVEGKPPKKIKALDGSP).

The protein belongs to the BPG-independent phosphoglycerate mutase family. A-PGAM subfamily.

It catalyses the reaction (2R)-2-phosphoglycerate = (2R)-3-phosphoglycerate. Its pathway is carbohydrate degradation; glycolysis; pyruvate from D-glyceraldehyde 3-phosphate: step 3/5. In terms of biological role, catalyzes the interconversion of 2-phosphoglycerate and 3-phosphoglycerate. The protein is 2,3-bisphosphoglycerate-independent phosphoglycerate mutase 1 (apgM1) of Methanothermobacter thermautotrophicus (strain ATCC 29096 / DSM 1053 / JCM 10044 / NBRC 100330 / Delta H) (Methanobacterium thermoautotrophicum).